The primary structure comprises 139 residues: Putative pre-16S rRNA nuclease (139 aa).

Belongs to the YqgF nuclease family.

It is found in the cytoplasm. Its function is as follows. Could be a nuclease involved in processing of the 5'-end of pre-16S rRNA. This chain is Putative pre-16S rRNA nuclease, found in Pectobacterium carotovorum subsp. carotovorum (strain PC1).